The following is a 119-amino-acid chain: Platelet basic protein (119 aa).

Positions 1 to 33 (MSLRLGAISSCTTSSPFPVLQVLLPLSLLLTTL) are cleaved as a signal peptide. The propeptide occupies 34-39 (VPATMG). 2 disulfides stabilise this stretch: cysteine 54–cysteine 80 and cysteine 56–cysteine 96.

Its subcellular location is the secreted. Its function is as follows. Chemoattractant factor for neutrophils. This is Platelet basic protein (PPBP) from Sus scrofa (Pig).